Reading from the N-terminus, the 359-residue chain is DNA integrity scanning protein DisA (359 aa).

In terms of domain architecture, DAC spans 7-146; that stretch reads DDIFRATLAA…GRRYVLDGSA (140 aa). ATP is bound by residues glycine 74, leucine 92, and 105 to 109; that span reads TRHRT.

It belongs to the DisA family. Homooctamer. Requires Mg(2+) as cofactor.

The catalysed reaction is 2 ATP = 3',3'-c-di-AMP + 2 diphosphate. Functionally, participates in a DNA-damage check-point that is active prior to asymmetric division when DNA is damaged. DisA forms globular foci that rapidly scan along the chromosomes during sporulation, searching for lesions. When a lesion is present, DisA pauses at the lesion site. This triggers a cellular response that culminates in a temporary block in sporulation initiation. Its function is as follows. Also has diadenylate cyclase activity, catalyzing the condensation of 2 ATP molecules into cyclic di-AMP (c-di-AMP). c-di-AMP acts as a signaling molecule that couples DNA integrity with progression of sporulation. The rise in c-di-AMP level generated by DisA while scanning the chromosome, operates as a positive signal that advances sporulation; upon encountering a lesion, the DisA focus arrests at the damaged site and halts c-di-AMP synthesis. In Frankia casuarinae (strain DSM 45818 / CECT 9043 / HFP020203 / CcI3), this protein is DNA integrity scanning protein DisA.